The sequence spans 97 residues: uncharacterized protein (97 aa).

This is an uncharacterized protein from Escherichia coli O157:H7.